Consider the following 398-residue polypeptide: MSKAKFERNKPHVNVGTIGHVDHGKTTLTAALTRVCHEVWGTGESRAFDQIDNAPEERARGITIATSHVEYDSPTRHYAHVDCPGHADYVKNMITGAAQMDGAILVCSAADGPMPQTREHILLSRQVGVPFIVVFLNKADMVDDEELLELVEMEVRDLLSQYDFPGDDTPIITGSALMALEGKDDNEMGTTAVKKLVEALDDYIPEPERAIDQPFLMPIEDVFSISGRGTVVTGRVERGIIKVGDEVEIVGIRDTTKTTCTGVEMFRKLLDEGRAGENVGVLLRGTKRDDVERGQVLCVPGSIKPHTKFECEVYVLSKEEGGRHTPFFKGYRPQFYFRTTDVTGSCELPEGVEMVMPGDNVKMTVTLIAPIAMEDGLRFAIREGGRTVGAGVVAKIIE.

Residues Lys-10–Glu-208 enclose the tr-type G domain. The interval Gly-19–Thr-26 is G1. Gly-19–Thr-26 serves as a coordination point for GTP. A Mg(2+)-binding site is contributed by Thr-26. Positions Gly-61–Ala-65 are G2. A G3 region spans residues Asp-82–Gly-85. GTP-binding positions include Asp-82–His-86 and Asn-137–Asp-140. Residues Asn-137 to Asp-140 are G4. The tract at residues Ser-175–Leu-177 is G5.

Belongs to the TRAFAC class translation factor GTPase superfamily. Classic translation factor GTPase family. EF-Tu/EF-1A subfamily. In terms of assembly, monomer.

Its subcellular location is the cytoplasm. It catalyses the reaction GTP + H2O = GDP + phosphate + H(+). Its function is as follows. GTP hydrolase that promotes the GTP-dependent binding of aminoacyl-tRNA to the A-site of ribosomes during protein biosynthesis. This Marinobacter nauticus (strain ATCC 700491 / DSM 11845 / VT8) (Marinobacter aquaeolei) protein is Elongation factor Tu.